The chain runs to 156 residues: UPF0523 protein C (156 aa).

The protein belongs to the UPF0523 family.

The polypeptide is UPF0523 protein C (Dictyostelium discoideum (Social amoeba)).